We begin with the raw amino-acid sequence, 309 residues long: Serine/threonine-protein phosphatase 2A catalytic subunit alpha isoform (309 aa).

Asp57, His59, Asp85, and Asn117 together coordinate Mn(2+). 3 residues coordinate Zn(2+): Asp57, His59, and Asp85. Asp85 and Asn117 together coordinate Fe(3+). His118 functions as the Proton donor in the catalytic mechanism. His167 and His241 together coordinate Mn(2+). His167 and His241 together coordinate Fe(3+). The residue at position 307 (Tyr307) is a Phosphotyrosine. Leucine methyl ester is present on Leu309.

This sequence belongs to the PPP phosphatase family. PP-1 subfamily. As to quaternary structure, PP2A consists of a common heterodimeric core enzyme, composed of PPP2CA, a 36 kDa catalytic subunit (subunit C), and PPP2R1A, a 65 kDa constant regulatory subunit (PR65 or subunit A), that associates with a variety of regulatory subunits. Proteins that associate with the core dimer include three families of regulatory subunits B (the R2/B/PR55/B55, R3/B''/PR72/PR130/PR59 and R5/B'/B56 families), the 48 kDa variable regulatory subunit, viral proteins, and cell signaling molecules. May indirectly interact with SGOL1, most probably through regulatory B56 subunits. Phosphatase component of the Integrator-PP2A (INTAC) complex, composed of the Integrator core complex and protein phosphatase 2A subunits PPP2CA and PPP2R1A. Mn(2+) serves as cofactor. Fe(3+) is required as a cofactor. The cofactor is Zn(2+). Post-translationally, reversibly methyl esterified on Leu-309 by leucine carboxyl methyltransferase 1 (LCMT1) and protein phosphatase methylesterase 1 (PPME1). Carboxyl methylation influences the affinity of the catalytic subunit for the different regulatory subunits, thereby modulating the PP2A holoenzyme's substrate specificity, enzyme activity and cellular localization. In terms of processing, phosphorylation of either threonine (by autophosphorylation-activated protein kinase) or tyrosine results in inactivation of the phosphatase. Auto-dephosphorylation has been suggested as a mechanism for reactivation.

The protein resides in the cytoplasm. It is found in the nucleus. The protein localises to the chromosome. It localises to the centromere. Its subcellular location is the cytoskeleton. The protein resides in the spindle pole. It catalyses the reaction O-phospho-L-seryl-[protein] + H2O = L-seryl-[protein] + phosphate. The enzyme catalyses O-phospho-L-threonyl-[protein] + H2O = L-threonyl-[protein] + phosphate. Inhibited by the interaction between PPP2R2A and ARPP19; this inhibition is enhanced when ARPP19 is phosphorylated. Inhibited by the interaction between PPP2R2A and PABIR1/FAM122A. PP2A is the major phosphatase for microtubule-associated proteins (MAPs). PP2A can modulate the activity of phosphorylase B kinase casein kinase 2, mitogen-stimulated S6 kinase, and MAP-2 kinase. Key mediator of a quality checkpoint during transcription elongation as part of the Integrator-PP2A (INTAC) complex. The INTAC complex drives premature transcription termination of transcripts that are unfavorably configured for transcriptional elongation: within the INTAC complex, PPP2CA catalyzes dephosphorylation of the C-terminal domain (CTD) of Pol II subunit POLR2A/RPB1 and SUPT5H/SPT5, thereby preventing transcriptional elongation. The protein is Serine/threonine-protein phosphatase 2A catalytic subunit alpha isoform (PPP2CA) of Gallus gallus (Chicken).